Reading from the N-terminus, the 295-residue chain is GTPase Era (295 aa).

Residues 7 to 176 form the Era-type G domain; it reads KTVSVCIIGR…ITSKAKIAPW (170 aa). The G1 stretch occupies residues 15–22; the sequence is GRPNSGKS. 15–22 serves as a coordination point for GTP; sequence GRPNSGKS. Residues 41 to 45 are G2; it reads QTTRS. The interval 62–65 is G3; the sequence is DTPG. Residues 62–66 and 124–127 contribute to the GTP site; these read DTPGI and NKIE. The segment at 124–127 is G4; that stretch reads NKIE. Residues 152 to 154 form a G5 region; that stretch reads ISA. Residues 204–281 form the KH type-2 domain; sequence LQQELPYKLT…HLFLFVKVRE (78 aa).

It belongs to the TRAFAC class TrmE-Era-EngA-EngB-Septin-like GTPase superfamily. Era GTPase family. Monomer.

Its subcellular location is the cytoplasm. It is found in the cell inner membrane. In terms of biological role, an essential GTPase that binds both GDP and GTP, with rapid nucleotide exchange. Plays a role in 16S rRNA processing and 30S ribosomal subunit biogenesis and possibly also in cell cycle regulation and energy metabolism. In Rickettsia canadensis (strain McKiel), this protein is GTPase Era.